The following is a 445-amino-acid chain: Putative MgpC-like protein MPN_464 (445 aa).

Positions 23–44 are disordered; it reads STTVAVQKSDSSGSQGQGTTDN. Over residues 31–43 the composition is skewed to low complexity; that stretch reads SDSSGSQGQGTTD.

Belongs to the MgpC family.

This Mycoplasma pneumoniae (strain ATCC 29342 / M129 / Subtype 1) (Mycoplasmoides pneumoniae) protein is Putative MgpC-like protein MPN_464.